Reading from the N-terminus, the 247-residue chain is uncharacterized protein (247 aa).

The interval 161–187 is disordered; that stretch reads KEQSDATSDATTSEKNKSPECPKATTE. A compositionally biased stretch (basic and acidic residues) spans 172–187; the sequence is TSEKNKSPECPKATTE.

This is an uncharacterized protein from Mus musculus (Mouse).